Here is a 173-residue protein sequence, read N- to C-terminus: Siroheme decarboxylase alpha subunit (173 aa).

His-115 and Arg-119 together coordinate substrate.

The protein belongs to the Ahb/Nir family. As to quaternary structure, forms a heterodimer composed of AhbA and AhbB.

The catalysed reaction is siroheme + 2 H(+) = 12,18-didecarboxysiroheme + 2 CO2. It participates in porphyrin-containing compound metabolism; protoheme biosynthesis. Involved in siroheme-dependent heme b biosynthesis. Catalyzes the decarboxylation of siroheme into didecarboxysiroheme. Siroheme is decarboxylated to monodecarboxysiroheme, which is in turn decarboxylated to didecarboxysiroheme. This is Siroheme decarboxylase alpha subunit from Desulfovibrio desulfuricans (strain ATCC 27774 / DSM 6949 / MB).